The following is a 340-amino-acid chain: Protein jhp_1168 (340 aa).

In terms of assembly, seems to interact with H.pylori HolB.

In terms of biological role, could be the functional equivalent of DNA polymerase III delta subunit (HolA). The sequence is that of Protein jhp_1168 from Helicobacter pylori (strain J99 / ATCC 700824) (Campylobacter pylori J99).